The following is a 434-amino-acid chain: UDP-N-acetylglucosamine 1-carboxyvinyltransferase 1 (434 aa).

22–23 (KN) is a binding site for phosphoenolpyruvate. UDP-N-acetyl-alpha-D-glucosamine is bound at residue R93. Residue C117 is the Proton donor of the active site. 2-(S-cysteinyl)pyruvic acid O-phosphothioketal is present on C117. Residues 122–126 (RPIDQ), D306, and V328 each bind UDP-N-acetyl-alpha-D-glucosamine.

It belongs to the EPSP synthase family. MurA subfamily.

It localises to the cytoplasm. It catalyses the reaction phosphoenolpyruvate + UDP-N-acetyl-alpha-D-glucosamine = UDP-N-acetyl-3-O-(1-carboxyvinyl)-alpha-D-glucosamine + phosphate. The protein operates within cell wall biogenesis; peptidoglycan biosynthesis. In terms of biological role, cell wall formation. Adds enolpyruvyl to UDP-N-acetylglucosamine. The polypeptide is UDP-N-acetylglucosamine 1-carboxyvinyltransferase 1 (Bacillus anthracis).